The primary structure comprises 881 residues: Probable inorganic carbon transporter subunit DabA (881 aa).

Zn(2+) contacts are provided by C399, D401, H585, and C600.

Belongs to the inorganic carbon transporter (TC 9.A.2) DabA family. As to quaternary structure, forms a complex with DabB. Requires Zn(2+) as cofactor.

The protein resides in the cell membrane. Its function is as follows. Part of an energy-coupled inorganic carbon pump. This chain is Probable inorganic carbon transporter subunit DabA, found in Geobacillus sp. (strain WCH70).